The following is a 253-amino-acid chain: rRNA adenine N-6-methyltransferase (253 aa).

Positions 14, 16, 40, 61, 85, and 101 each coordinate S-adenosyl-L-methionine. Residues 229-253 form a disordered region; the sequence is CAREESTPRPYLPDCTPTTGSISSR. The span at 244–253 shows a compositional bias: polar residues; the sequence is TPTTGSISSR.

It belongs to the class I-like SAM-binding methyltransferase superfamily. rRNA adenine N(6)-methyltransferase family.

Functionally, involved in erythromycin resistance. This Corynebacterium diphtheriae protein is rRNA adenine N-6-methyltransferase (ermA).